Reading from the N-terminus, the 308-residue chain is Tetraspanin-12 (308 aa).

Topologically, residues 1–41 (MANRRQPVQHRAQQRVYRQSQIRYAPGAGGESEISCCVKYS) are cytoplasmic. A helical membrane pass occupies residues 42-62 (VFSFNVIFFLLGFGLLLFGVW). Residues 63–86 (AQIEKNTFVNMLSKASKLYLDPTW) are Extracellular-facing. A helical transmembrane segment spans residues 87–107 (PLLIVGFLTFIIGFSGCVGSL). At 108–112 (RENTS) the chain is on the cytoplasmic side. The chain crosses the membrane as a helical span at residues 113–133 (FLTFYSTLLGLLLIAEFSAGV). Topologically, residues 134–268 (FAYACRDQLD…PKLQLWLNNN (135 aa)) are extracellular. The N-linked (GlcNAc...) asparagine glycan is linked to N213. Residues 269 to 289 (MLLVAVSMVIIAIIQVLGICF) form a helical membrane-spanning segment. The Cytoplasmic segment spans residues 290–308 (AQNLKSDILAQRAKWYYTH).

Belongs to the tetraspanin (TM4SF) family. In terms of assembly, may interact with protease sup-17; the interaction promotes sup-17 cell membrane localization. In terms of tissue distribution, expressed in the germline.

The protein localises to the cell membrane. Its subcellular location is the cytoplasmic vesicle membrane. The protein resides in the endosome membrane. It is found in the early endosome membrane. It localises to the late endosome membrane. The protein localises to the recycling endosome membrane. Its subcellular location is the golgi apparatus. The protein resides in the trans-Golgi network membrane. Functionally, functions redundantly with tsp-14 isoform a to regulate body size, embryonic and vulva development. Functions redundantly with tsp-14 (isoforms a and b) to regulate cell fate specification in the postembryonic mesodermal M lineage and male development. May regulate BMP-like Sma/Mab signaling by mediating protease sup-17 trafficking to the cell surface. Together with tsp-14, functions redundantly to maintain cell surface levels of the BMP type II receptor daf-4 (but not BMP type I receptor sma-6), probably by regulating endosomal sorting of receptors and their targeting to degradative lysosomes. Together with tsp-14 involved in maintaining the structural and functional integrity of the endosomal network. Together with tsp-14, probably acts by modulating the activation of glp-1, a Notch-like receptor, to regulate germline maturation. Probably acts by modulating the activation of lin-12, a Notch-like receptor, to regulate cell fate specification such as the anchor cell/ventral uterine precursor cell decision. The protein is Tetraspanin-12 of Caenorhabditis elegans.